Reading from the N-terminus, the 114-residue chain is Ig kappa chain V region AH80-5 (114 aa).

Residues 1 to 22 (IVMTQTPSSKSVPVGDTVTINC) form a framework-1 region. The interval 23-35 (QAAQSVYSNNRLS) is complementarity-determining-1. Residues 36–50 (WFQQKPGQPPKGLIY) form a framework-2 region. Residues 51–57 (YASTLAS) are complementarity-determining-2. The segment at 58–93 (GVQQDPSRFKGSGSGTQFTLTISDVQCBBAATVYYC) is framework-3. The segment at 94 to 103 (QGYKSSDTRA) is complementarity-determining-3. Positions 104 to 113 (FGGGTEVVVK) are framework-4.

This Oryctolagus cuniculus (Rabbit) protein is Ig kappa chain V region AH80-5.